Consider the following 562-residue polypeptide: Phosphatidylinositol 4-phosphate 5-kinase type-1 alpha (562 aa).

One can recognise a PIPK domain in the interval 81 to 449 (TSSALKGAIQ…RFQRFMCNTV (369 aa)). A Glycyl lysine isopeptide (Lys-Gly) (interchain with G-Cter in ubiquitin) cross-link involves residue lysine 103. Serine 486 carries the post-translational modification Phosphoserine. A disordered region spans residues 506-526 (HLGRPDVLPQTPPLEEISEGS).

Interacts with RAC1. Interacts with TUT1. Forms a complex with CDH1/E-cadherin, CTNNB1/beta-catenin and CTNND1 at the plasma membrane upon calcium stimulation. Found in a ternary complex with IRS1 and DGKZ in the absence of insulin stimulation. Interacts with DGKZ. Interacts with PIP4K2C; the interaction inhibits PIP5K1A kinase activity. Highly expressed in heart, placenta, skeletal muscle, kidney and pancreas. Detected at lower levels in brain, lung and liver.

The protein resides in the cell membrane. The protein localises to the cytoplasm. It is found in the nucleus. Its subcellular location is the nucleus speckle. It localises to the cell projection. The protein resides in the ruffle. The protein localises to the lamellipodium. The catalysed reaction is a 1,2-diacyl-sn-glycero-3-phospho-(1D-myo-inositol 4-phosphate) + ATP = a 1,2-diacyl-sn-glycero-3-phospho-(1D-myo-inositol-4,5-bisphosphate) + ADP + H(+). It carries out the reaction 1-octadecanoyl-2-(5Z,8Z,11Z,14Z)-eicosatetraenoyl-sn-glycero-3-phospho-1D-myo-inositol 4-phosphate + ATP = 1-octadecanoyl-2-(5Z,8Z,11Z,14Z)-eicosatetraenoyl-sn-glycero-3-phospho-1D-myo-inositol 4,5-bisphosphate + ADP + H(+). The enzyme catalyses 1,2-dihexadecanoyl-sn-glycero-3-phospho-(1D-myo-inositol-4-phosphate) + ATP = 1,2-dihexadecanoyl-sn-glycero-3-phospho-(1D-myo-inositol-4,5-bisphosphate) + ADP + H(+). It catalyses the reaction 1-octadecanoyl-2-(9Z)-octadecenoyl-sn-glycero-3-phospho-1D-myo-inositol 4-phosphate + ATP = 1-octadecanoyl-2-(9Z)-octadecenoyl-sn-glycero-3-phospho-1D-myo-inositol 4,5-bisphosphate + ADP + H(+). The catalysed reaction is 1-octadecanoyl-2-(9Z)-octadecenoyl-sn-glycero-3-phospho-1D-myo-inositol + ATP = 1-octadecanoyl-2-(9Z)-octadecenoyl-sn-glycero-3-phospho-1D-myo-inositol 5-phosphate + ADP + H(+). It carries out the reaction 1-octadecanoyl-2-(9Z,12Z)-octadecadienoyl-sn-glycero-3-phospho-1D-myo-inositol + ATP = 1-octadecanoyl-2-(9Z,12Z)-octadecadienoyl-sn-glycero-3-phospho-1D-myo-inositol 5-phosphate + ADP + H(+). The enzyme catalyses 1-octadecanoyl-2-(5Z,8Z,11Z,14Z-eicosatetraenoyl)-sn-glycero-3-phospho-(1D-myo-inositol) + ATP = 1-octadecanoyl-2-(5Z,8Z,11Z,14Z)-eicosatetraenoyl-sn-glycero-3-phospho-1D-myo-inositol 5-phosphate + ADP + H(+). It catalyses the reaction 1,2-di-(9Z,12Z)-octadecadienoyl-sn-glycero-3-phospho-1D-myo-inositol + ATP = 1,2-di(9Z,12Z)-octadecadienoyl-sn-glycero-3-phospho-1D-myo-inositol 5-phosphate + ADP + H(+). With respect to regulation, activated by diarachidonoyl phosphatidic acid (DAPA), when 1,2-dipalmitoyl-PI4P is used as a substrate. Catalyzes the phosphorylation of phosphatidylinositol 4-phosphate (PtdIns(4)P/PI4P) to form phosphatidylinositol 4,5-bisphosphate (PtdIns(4,5)P2/PIP2), a lipid second messenger that regulates several cellular processes such as signal transduction, vesicle trafficking, actin cytoskeleton dynamics, cell adhesion, and cell motility. PtdIns(4,5)P2 can directly act as a second messenger or can be utilized as a precursor to generate other second messengers: inositol 1,4,5-trisphosphate (IP3), diacylglycerol (DAG) or phosphatidylinositol-3,4,5-trisphosphate (PtdIns(3,4,5)P3/PIP3). PIP5K1A-mediated phosphorylation of PtdIns(4)P is the predominant pathway for PtdIns(4,5)P2 synthesis. Can also use phosphatidylinositol (PtdIns) as substrate in vitro. Together with PIP5K1C, is required for phagocytosis, both enzymes regulating different types of actin remodeling at sequential steps. Promotes particle ingestion by activating the WAS GTPase-binding protein that induces Arp2/3 dependent actin polymerization at the nascent phagocytic cup. Together with PIP5K1B, is required, after stimulation by G-protein coupled receptors, for the synthesis of IP3 that will induce stable platelet adhesion. Recruited to the plasma membrane by the E-cadherin/beta-catenin complex where it provides the substrate PtdIns(4,5)P2 for the production of PtdIns(3,4,5)P3, IP3 and DAG, that will mobilize internal calcium and drive keratinocyte differentiation. Positively regulates insulin-induced translocation of SLC2A4 to the cell membrane in adipocytes. Together with PIP5K1C has a role during embryogenesis. Independently of its catalytic activity, is required for membrane ruffling formation, actin organization and focal adhesion formation during directional cell migration by controlling integrin-induced translocation of the small GTPase RAC1 to the plasma membrane. Also functions in the nucleus where it acts as an activator of TUT1 adenylyltransferase activity in nuclear speckles, thereby regulating mRNA polyadenylation of a select set of mRNAs. This chain is Phosphatidylinositol 4-phosphate 5-kinase type-1 alpha, found in Homo sapiens (Human).